Here is a 76-residue protein sequence, read N- to C-terminus: Putative snRNP Sm-like protein (76 aa).

One can recognise a Sm domain in the interval 4 to 76 (RPLDVIHRSL…VLAISPVDIE (73 aa)).

This sequence belongs to the snRNP Sm proteins family.

This chain is Putative snRNP Sm-like protein, found in Thermococcus gammatolerans (strain DSM 15229 / JCM 11827 / EJ3).